Consider the following 226-residue polypeptide: Beta-casein (226 aa).

Residues 1 to 51 form a disordered region; the sequence is REKEELNVSSETVESLSSNEPDSSSEESITHINKEKSQKFKHEGQQQREVE. Ser9 carries the post-translational modification Phosphoserine. Thr12 bears the Phosphothreonine mark. 4 positions are modified to phosphoserine: Ser15, Ser17, Ser18, and Ser25. Positions 28-51 are enriched in basic and acidic residues; that stretch reads SITHINKEKSQKFKHEGQQQREVE.

Belongs to the beta-casein family. Post-translationally, there are at least three different forms found in milk, with varying degrees of phosphorylation. These include form 5-P which is phosphorylated at three sites, this form is present in low amounts, form 6-P which is phosphorylated at six sites, and form 7-P which is phosphorylated at seven sites. Mammary gland specific. Secreted in milk.

Its subcellular location is the secreted. Its function is as follows. Important role in determination of the surface properties of the casein micelles. This chain is Beta-casein, found in Equus asinus (Donkey).